The sequence spans 644 residues: Exoribonuclease 2 (644 aa).

Residues 189-516 (REDLTALDFV…NHRLLKAVIK (328 aa)) form the RNB domain. Residues 561–643 (GTRFAAEIVD…ETRGIIARPV (83 aa)) enclose the S1 motif domain.

The protein belongs to the RNR ribonuclease family. RNase II subfamily.

The protein localises to the cytoplasm. It catalyses the reaction Exonucleolytic cleavage in the 3'- to 5'-direction to yield nucleoside 5'-phosphates.. In terms of biological role, involved in mRNA degradation. Hydrolyzes single-stranded polyribonucleotides processively in the 3' to 5' direction. The polypeptide is Exoribonuclease 2 (Shigella sonnei (strain Ss046)).